Here is a 248-residue protein sequence, read N- to C-terminus: Inner membrane protein pE248R (248 aa).

Gly2 carries N-myristoyl glycine; by host lipidation. At 2–199 the chain is on the cytoplasmic side; the sequence is GGSTSKNSFK…ADAISAVFKN (198 aa). The helical transmembrane segment at 200 to 220 threads the bilayer; the sequence is IMVAAVVIVLIIVGFIAVFYF. The Extracellular segment spans residues 221 to 248; the sequence is LHSRHRHEEEEEAEPLISNKVLKNAAVS.

Belongs to the asfivirus E248R family. As to quaternary structure, interacts with A151R.

The protein localises to the host membrane. It localises to the virion membrane. Essential for viral fusion with host endosomal membrane and core release. In African swine fever virus (strain Badajoz 1971 Vero-adapted) (Ba71V), this protein is Inner membrane protein pE248R.